We begin with the raw amino-acid sequence, 714 residues long: Stellatatriene synthase (714 aa).

A stellata-2,6,19-trien synthase region spans residues 1 to 325; sequence MEYKFSTVVD…RYNSSGSFSD (325 aa). Mg(2+) contacts are provided by D92 and D96. The DDXXD motif 1 signature appears at 92-96; it reads DDVTD. An NSE motif motif is present at residues 276–284; that stretch reads YLKIVEEYK. A geranylgeranyl diphosphate synthase region spans residues 326–713; that stretch reads HQLELMKNGV…LRLIMELLKT (388 aa). The segment at 332–356 is disordered; that stretch reads KNGVPKDPASGSTNGTSNGTSNGTS. Positions 341 to 356 are enriched in low complexity; the sequence is SGSTNGTSNGTSNGTS. Isopentenyl diphosphate is bound by residues K434, R437, and H466. Positions 473 and 477 each coordinate Mg(2+). The short motif at 473–477 is the DDXXD motif 2 element; the sequence is DDVED. R482 contacts dimethylallyl diphosphate. Position 483 (R483) interacts with isopentenyl diphosphate. K560, T561, Q596, N603, K613, and K623 together coordinate dimethylallyl diphosphate.

It in the N-terminal section; belongs to the terpene synthase family. In the C-terminal section; belongs to the FPP/GGPP synthase family. As to quaternary structure, hexamer.

The enzyme catalyses 4 isopentenyl diphosphate + dimethylallyl diphosphate = (2E,6E,10E,14E)-geranylfarnesyl diphosphate + 4 diphosphate. It catalyses the reaction (2E,6E,10E,14E)-geranylfarnesyl diphosphate = stellata-2,6,19-triene + diphosphate. The protein operates within secondary metabolite biosynthesis; terpenoid biosynthesis. In terms of biological role, multifunctional diterpene synthase; part of the gene cluster that mediates the biosynthesis of the sesterterpene stellatic acid. The first step in the pathway is performed by the stellatatriene synthase that possesses both prenyl transferase and terpene cyclase activity, converting isopentenyl diphosphate and dimethylallyl diphosphate into geranylgeranyl diphosphate (GGDP) and then converting GGDP into stellata-2,6,19-triene. The cytochrome P450 monooxygenase Stl-P450 then catalyzes three successive oxidation reactions on the C-20 methyl group to generate the carboxylic acid of stellatic acid. The protein is Stellatatriene synthase of Emericella variicolor (Aspergillus stellatus).